We begin with the raw amino-acid sequence, 555 residues long: Synaptotagmin-14 (555 aa).

Over 1–24 the chain is Extracellular; it reads MAIEGGERTCGVHELICIRKVSPE. A helical; Signal-anchor for type III membrane protein membrane pass occupies residues 25–47; that stretch reads AVGFLSAVGVFIVLMLLLFLYIN. Residues 48–555 lie on the Cytoplasmic side of the membrane; the sequence is KKFCFENVGG…VCRWHALLES (508 aa). 3 disordered regions span residues 76–97, 157–179, and 205–258; these read YNSY…EALG, TPPL…HLSC, and CPSE…PEPE. The span at 211 to 224 shows a compositional bias: basic and acidic residues; sequence TGHEAESYHNKGYE. 2 consecutive C2 domains span residues 260-379 and 415-550; these read KYGT…SLPV and SVPE…CRWH.

The protein belongs to the synaptotagmin family. As to quaternary structure, homodimer. Can also form heterodimers. Expressed in heart and testis. Expressed in brain (especially in the cerebellum).

It localises to the membrane. Functionally, may be involved in the trafficking and exocytosis of secretory vesicles in non-neuronal tissues. Is Ca(2+)-independent. This is Synaptotagmin-14 (Syt14) from Mus musculus (Mouse).